The sequence spans 409 residues: Imidazolonepropionase (409 aa).

Fe(3+)-binding residues include His78 and His80. Residues His78 and His80 each coordinate Zn(2+). Positions 87, 150, and 183 each coordinate 4-imidazolone-5-propanoate. Tyr150 is a binding site for N-formimidoyl-L-glutamate. His248 contacts Fe(3+). Zn(2+) is bound at residue His248. Gln251 contributes to the 4-imidazolone-5-propanoate binding site. A Fe(3+)-binding site is contributed by Asp323. Asp323 serves as a coordination point for Zn(2+). Residues Asn325 and Gly327 each contribute to the N-formimidoyl-L-glutamate site. Thr328 provides a ligand contact to 4-imidazolone-5-propanoate.

It belongs to the metallo-dependent hydrolases superfamily. HutI family. The cofactor is Zn(2+). Requires Fe(3+) as cofactor.

The protein resides in the cytoplasm. The enzyme catalyses 4-imidazolone-5-propanoate + H2O = N-formimidoyl-L-glutamate. It participates in amino-acid degradation; L-histidine degradation into L-glutamate; N-formimidoyl-L-glutamate from L-histidine: step 3/3. Catalyzes the hydrolytic cleavage of the carbon-nitrogen bond in imidazolone-5-propanoate to yield N-formimidoyl-L-glutamate. It is the third step in the universal histidine degradation pathway. The chain is Imidazolonepropionase from Mesorhizobium japonicum (strain LMG 29417 / CECT 9101 / MAFF 303099) (Mesorhizobium loti (strain MAFF 303099)).